Reading from the N-terminus, the 137-residue chain is Large ribosomal subunit protein uL16 (137 aa).

This sequence belongs to the universal ribosomal protein uL16 family. As to quaternary structure, part of the 50S ribosomal subunit.

Functionally, binds 23S rRNA and is also seen to make contacts with the A and possibly P site tRNAs. This chain is Large ribosomal subunit protein uL16, found in Streptococcus suis (strain 98HAH33).